Here is a 366-residue protein sequence, read N- to C-terminus: Ferredoxin--NADP reductase, leaf isozyme 2, chloroplastic (366 aa).

The N-terminal 48 residues, 1-48, are a transit peptide targeting the chloroplast; sequence MAAVNTVSSLPCSKAGAAVAGGAPRPSTCSVFYPPRCWSKRSSGNGVR. The FAD-binding FR-type domain maps to 87-209; it reads KEPYTGRCLL…TGPVGKEMLM (123 aa). FAD contacts are provided by residues 145-148, 166-168, Y172, and 183-185; these read RLYS, CVK, and VCS. NADP(+) contacts are provided by S148 and K168. C184 and C189 are oxidised to a cystine. At S185 the chain carries Phosphoserine. T216 carries the phosphothreonine modification. FAD is bound at residue T224. Residues T224, 256–257, 286–287, K296, 325–326, and E364 contribute to the NADP(+) site; these read VP, SR, and GL.

The protein belongs to the ferredoxin--NADP reductase type 1 family. In terms of assembly, heterodimer with LFNR1. Component of high molecular weight thylakoid LFNRs-containing protein complexes containing LIR1, LFNR1, LFNR2, TIC62 and TROL proteins. Interacts directly with LFNR1 and LFNR2; LIR1 increases the affinity of LFNR1 and LFNR2 for TIC62 and subsequent thylakoid relocalization. FAD serves as cofactor. Post-translationally, may form interchain disulfide bonds with LIR1.

It is found in the plastid. The protein resides in the chloroplast stroma. The protein localises to the chloroplast thylakoid membrane. It carries out the reaction 2 reduced [2Fe-2S]-[ferredoxin] + NADP(+) + H(+) = 2 oxidized [2Fe-2S]-[ferredoxin] + NADPH. It participates in energy metabolism; photosynthesis. In terms of biological role, plays a key role in regulating the relative amounts of cyclic and non-cyclic electron flow to meet the demands of the plant for ATP and reducing power. The polypeptide is Ferredoxin--NADP reductase, leaf isozyme 2, chloroplastic (Oryza sativa subsp. indica (Rice)).